A 284-amino-acid chain; its full sequence is Gap junction beta-1 protein (284 aa).

Over 1–22 the chain is Cytoplasmic; the sequence is MNWTGLYTLLSGVNRHSTAIGR. A helical membrane pass occupies residues 23–45; sequence VWLSVIFIFRIMVLVVAAESVWG. The Extracellular portion of the chain corresponds to 46–75; it reads DEKSSFICNTLQPGCNSVCYDHFFPISHVR. The chain crosses the membrane as a helical span at residues 76 to 95; it reads LWSLQLILVSTPALLVAMHV. At 96-130 the chain is on the cytoplasmic side; that stretch reads AHQQHIEKKMLRLEGHGDPLHLEEVKRHKVHISGT. Residues 131–153 traverse the membrane as a helical segment; the sequence is LWWTYVISVVFRLLFEAAFMYVF. Residues 154–191 are Extracellular-facing; the sequence is YLLYPGYAMVRLVKCDAYPCPNTVDCFVSRPTEKTIFT. A helical transmembrane segment spans residues 192-214; that stretch reads VFMLAASGICIILNVAEVVYLIF. The Cytoplasmic segment spans residues 215-284; the sequence is RACARRAQRR…AEKSDRCSAC (70 aa). Phosphoserine occurs at positions 233, 259, 267, and 278.

This sequence belongs to the connexin family. Beta-type (group I) subfamily. As to quaternary structure, a connexon is composed of a hexamer of connexins. Interacts with CNST.

It localises to the cell membrane. It is found in the cell junction. The protein localises to the gap junction. Its function is as follows. One gap junction consists of a cluster of closely packed pairs of transmembrane channels, the connexons, through which materials of low MW diffuse from one cell to a neighboring cell. In Bos taurus (Bovine), this protein is Gap junction beta-1 protein (GJB1).